Reading from the N-terminus, the 152-residue chain is Transcriptional regulator MraZ (152 aa).

SpoVT-AbrB domains lie at 5–52 (VTSI…PLHE) and 81–124 (ATEC…QDKQ).

It belongs to the MraZ family. Forms oligomers.

Its subcellular location is the cytoplasm. It localises to the nucleoid. The polypeptide is Transcriptional regulator MraZ (Actinobacillus pleuropneumoniae serotype 3 (strain JL03)).